We begin with the raw amino-acid sequence, 624 residues long: Penicillin-binding protein 4 (624 aa).

The signal sequence occupies residues 1-21; sequence MTMLRKIIGWILLLCIIPLFA. The active-site Proton donor; for transglycosylase activity is the Glu-96. Catalysis depends on Ser-388, which acts as the Acyl-ester intermediate; for transpeptidase activity.

It in the N-terminal section; belongs to the glycosyltransferase 51 family. In the C-terminal section; belongs to the transpeptidase family. Post-translationally, the N-terminus is blocked.

It localises to the cell membrane. The catalysed reaction is [GlcNAc-(1-&gt;4)-Mur2Ac(oyl-L-Ala-gamma-D-Glu-L-Lys-D-Ala-D-Ala)](n)-di-trans,octa-cis-undecaprenyl diphosphate + beta-D-GlcNAc-(1-&gt;4)-Mur2Ac(oyl-L-Ala-gamma-D-Glu-L-Lys-D-Ala-D-Ala)-di-trans,octa-cis-undecaprenyl diphosphate = [GlcNAc-(1-&gt;4)-Mur2Ac(oyl-L-Ala-gamma-D-Glu-L-Lys-D-Ala-D-Ala)](n+1)-di-trans,octa-cis-undecaprenyl diphosphate + di-trans,octa-cis-undecaprenyl diphosphate + H(+). It catalyses the reaction Preferential cleavage: (Ac)2-L-Lys-D-Ala-|-D-Ala. Also transpeptidation of peptidyl-alanyl moieties that are N-acyl substituents of D-alanine.. In terms of biological role, cell wall formation. Synthesis of cross-linked peptidoglycan from the lipid intermediates. The enzyme has a penicillin-insensitive transglycosylase N-terminal domain (formation of linear glycan strands) and a penicillin-sensitive transpeptidase C-terminal domain (cross-linking of the peptide subunits). Has a partially redundant function with PBP-2A (pbpA) during spore outgrowth. In Bacillus subtilis (strain 168), this protein is Penicillin-binding protein 4.